A 38-amino-acid polypeptide reads, in one-letter code: Large ribosomal subunit protein bL36 (38 aa).

Belongs to the bacterial ribosomal protein bL36 family.

The protein is Large ribosomal subunit protein bL36 of Streptococcus agalactiae serotype III (strain NEM316).